Here is a 207-residue protein sequence, read N- to C-terminus: Large ribosomal subunit protein uL3 (207 aa).

It belongs to the universal ribosomal protein uL3 family. As to quaternary structure, part of the 50S ribosomal subunit. Forms a cluster with proteins L14 and L19.

In terms of biological role, one of the primary rRNA binding proteins, it binds directly near the 3'-end of the 23S rRNA, where it nucleates assembly of the 50S subunit. In Fervidobacterium nodosum (strain ATCC 35602 / DSM 5306 / Rt17-B1), this protein is Large ribosomal subunit protein uL3.